Consider the following 95-residue polypeptide: MSVDIDTVKRVARLARIAVDEEDASRMTGELNAILGFVEQLNEVDVTGVEPMTSVIPTTMKMRVDEVTDGSKAEDIVANAPQTEEHFFLVPKVVE.

The protein belongs to the GatC family. Heterotrimer of A, B and C subunits.

It catalyses the reaction L-glutamyl-tRNA(Gln) + L-glutamine + ATP + H2O = L-glutaminyl-tRNA(Gln) + L-glutamate + ADP + phosphate + H(+). It carries out the reaction L-aspartyl-tRNA(Asn) + L-glutamine + ATP + H2O = L-asparaginyl-tRNA(Asn) + L-glutamate + ADP + phosphate + 2 H(+). Allows the formation of correctly charged Asn-tRNA(Asn) or Gln-tRNA(Gln) through the transamidation of misacylated Asp-tRNA(Asn) or Glu-tRNA(Gln) in organisms which lack either or both of asparaginyl-tRNA or glutaminyl-tRNA synthetases. The reaction takes place in the presence of glutamine and ATP through an activated phospho-Asp-tRNA(Asn) or phospho-Glu-tRNA(Gln). This Chelativorans sp. (strain BNC1) protein is Aspartyl/glutamyl-tRNA(Asn/Gln) amidotransferase subunit C.